Here is a 183-residue protein sequence, read N- to C-terminus: Small ribosomal subunit protein bS20c (183 aa).

The transit peptide at 1 to 68 directs the protein to the chloroplast; sequence MAAISMACVS…FQRRGFSVVC (68 aa). The disordered stretch occupies residues 79 to 99; sequence AAKRTRQAETRRLRNKARKSE.

As to quaternary structure, component of the chloroplast small ribosomal subunit (SSU). Mature 70S chloroplast ribosomes of higher plants consist of a small (30S) and a large (50S) subunit. The 30S small subunit contains 1 molecule of ribosomal RNA (16S rRNA) and 24 different proteins. The 50S large subunit contains 3 rRNA molecules (23S, 5S and 4.5S rRNA) and 33 different proteins.

The protein localises to the plastid. Its subcellular location is the chloroplast. In terms of biological role, component of the chloroplast ribosome (chloro-ribosome), a dedicated translation machinery responsible for the synthesis of chloroplast genome-encoded proteins, including proteins of the transcription and translation machinery and components of the photosynthetic apparatus. The chain is Small ribosomal subunit protein bS20c (RPS20) from Spinacia oleracea (Spinach).